The chain runs to 475 residues: Protein transport protein Sec61 subunit alpha (475 aa).

10 consecutive transmembrane segments (helical) span residues 33-53, 76-96, 118-138, 145-165, 173-193, 241-261, 289-309, 354-374, 420-440, and 441-461; these read LWTAITLFIFLVCCQIPLFGI, LMELGITPIVTSGLIMQLLAG, LFGMIITIGQAVVYVMTGMYG, AGICLLIIIQLFIASLIVLLL, YGLGSGISLFIATNICETIVW, NLMNLSATILVFGIVIYFQGF, IPIILQSALVSGLYVISQMLA, FLDPIHGLLYITFMLGSCAFF, AAFGGLCIGALSVLADFIGAI, and GSGTGILLAVTIIYQYFEIFV.

Belongs to the SecY/SEC61-alpha family. In terms of assembly, the SEC61 channel-forming translocon complex consists of channel-forming core components SEC61A1, SEC61B and SEC61G and different auxiliary components such as SEC62 and SEC63. The SEC61 channel associates with the multi-pass translocon (MPT) complex. In terms of tissue distribution, expressed predominantly in epidermal cells of the embryo.

The protein localises to the endoplasmic reticulum membrane. Its function is as follows. Component of SEC61 channel-forming translocon complex that mediates transport of signal peptide-containing precursor polypeptides across the endoplasmic reticulum (ER). Forms a ribosome receptor and a gated pore in the ER membrane, both functions required for cotranslational translocation of nascent polypeptides. May cooperate with auxiliary protein SEC62, SEC63 and HSPA5/BiP to enable post-translational transport of small presecretory proteins. The SEC61 channel is also involved in ER membrane insertion of transmembrane proteins: it mediates membrane insertion of the first few transmembrane segments of proteins, while insertion of subsequent transmembrane regions of multi-pass membrane proteins is mediated by the multi-pass translocon (MPT) complex. The sequence is that of Protein transport protein Sec61 subunit alpha from Halocynthia roretzi (Sea squirt).